The chain runs to 347 residues: NADH-ubiquinone oxidoreductase chain 2 (347 aa).

The next 11 membrane-spanning stretches (helical) occupy residues 3 to 23 (PPILIIIMSTVISGTMIVLTS), 25 to 45 (HWMLTWIGFEMNMLAVIPILM), 59 to 79 (YFLMQATASMLLMMGITINLL), 96 to 116 (TLMTIALAMKLGLAPFHFWVP), 122 to 142 (ISLSSGMILLTWQKIAPLSVL), 153 to 173 (LLLLMAILSVLIGGWGGLNQT), 178 to 198 (ILAYSSIAHMGWMSTILIYNP), 200 to 220 (MMLLNLIIYIMMTLSTFMLFM), 237 to 257 (MPLITSLILMLMLSLGGLPPL), 274 to 294 (EMIIMPTFLAITALLNLYFYM), and 325 to 345 (FLPPLIVMSTMLIPLTPIISI).

This sequence belongs to the complex I subunit 2 family. Core subunit of respiratory chain NADH dehydrogenase (Complex I) which is composed of 45 different subunits. Interacts with TMEM242.

The protein localises to the mitochondrion inner membrane. It catalyses the reaction a ubiquinone + NADH + 5 H(+)(in) = a ubiquinol + NAD(+) + 4 H(+)(out). In terms of biological role, core subunit of the mitochondrial membrane respiratory chain NADH dehydrogenase (Complex I) which catalyzes electron transfer from NADH through the respiratory chain, using ubiquinone as an electron acceptor. Essential for the catalytic activity and assembly of complex I. This Paradoxurus hermaphroditus (Asian palm civet) protein is NADH-ubiquinone oxidoreductase chain 2.